We begin with the raw amino-acid sequence, 136 residues long: Large ribosomal subunit protein uL16 (136 aa).

It belongs to the universal ribosomal protein uL16 family. As to quaternary structure, part of the 50S ribosomal subunit.

Functionally, binds 23S rRNA and is also seen to make contacts with the A and possibly P site tRNAs. This chain is Large ribosomal subunit protein uL16, found in Shigella flexneri.